The sequence spans 952 residues: MPPIYVKPENALKRSEELLALGTPQSQQQAFDNLVEVFQSKRFKQTPINVLEPIVTKFIDLCVVLSRKAHAKSGLLVFKSAAQTTNVGAIERVLNHFIAKAEARLAAAVEQAKKEVAALPDVPVVDDDLPLQPASLMLDCFVDSAGDRERIERRLIAPAQKFCWDSYDICLDIAKSNDRLEVIYQSIAHRAFHFCKIHQRKADFRRLCEQRLRKDLANAAKYSHQQHAINLSDPETLGRFLDTRFLQLETAVELELWQEAFRSIEDVHGLIAGRKGTKPSMMANYYEKLTQIFKAEGGKQTAVFHAAAWARYFQHAERAGIVNDKASGCVLLSALAVPLGEVEVKQRLVALLNLPKTPTREALVQDAAAKHLKRVPADIRQIYKILEVDFEPTTASKVLAPLITSLSPEYQPYLPALRDVVLSRLLQALAQVYDSVTLSHILDLVKPLDNTPWATDMSSLEKFLVTACRRGDIRASVDHVAQTITFVSTPPDANGLQTLAVCLYNTIQYLNPSRLAPVSRSDAFAAAIAQAEEERKAASHKRQIVIRRRELLEEAKLRREKEASTALAERLKIKAEEDARRAKEEAKQAEIDRVRKQIHETKQAEAKQLAASLAAQGALKVDISSIEDLDSSKLVAMQVEQLAKEKKELSERLRIVGKRVDHLERAMRKEERPLLAQDYERQKAEDRAAHDRANQIAREQAIEQQRAARELKQRLGRMLEDYEAVKERIESQMQEELKAAKEEARRKIEEEKAQLREKVIKRKREEKERKLKEAREAEERKRKEEEEAAQKAEEEARAAAALEAEAAAAEQRRAEREAQRQSDLERIRAQQEREEEALRRRQAEKAAATSGGSAYRPPARAGTTPPTASPAPSSGGPSWLARRKAMEAQSAGGAPVASSPKPVPSNSAAASAPASNGPESIAGEAEKPALTGSVWRRGMGARRGMPSTRGGA.

Residues 315–491 (HAERAGIVND…QTITFVSTPP (177 aa)) enclose the PCI domain. The stretch at 522–849 (DAFAAAIAQA…RRQAEKAAAT (328 aa)) forms a coiled coil. Residues 757–797 (EKVIKRKREEKERKLKEAREAEERKRKEEEEAAQKAEEEAR) are compositionally biased toward basic and acidic residues. The disordered stretch occupies residues 757–952 (EKVIKRKREE…RGMPSTRGGA (196 aa)). Positions 798–809 (AAAALEAEAAAA) are enriched in low complexity. A compositionally biased stretch (basic and acidic residues) spans 810 to 844 (EQRRAEREAQRQSDLERIRAQQEREEEALRRRQAE). 2 stretches are compositionally biased toward low complexity: residues 856–878 (RPPA…GGPS) and 893–918 (GAPV…SNGP).

Belongs to the eIF-3 subunit A family. As to quaternary structure, component of the eukaryotic translation initiation factor 3 (eIF-3) complex.

The protein resides in the cytoplasm. In terms of biological role, RNA-binding component of the eukaryotic translation initiation factor 3 (eIF-3) complex, which is involved in protein synthesis of a specialized repertoire of mRNAs and, together with other initiation factors, stimulates binding of mRNA and methionyl-tRNAi to the 40S ribosome. The eIF-3 complex specifically targets and initiates translation of a subset of mRNAs involved in cell proliferation. This chain is Eukaryotic translation initiation factor 3 subunit A, found in Cryptococcus neoformans var. neoformans serotype D (strain B-3501A) (Filobasidiella neoformans).